The sequence spans 282 residues: Acetyl-coenzyme A carboxylase carboxyl transferase subunit beta (282 aa).

The CoA carboxyltransferase N-terminal domain occupies 29–282; sequence LWRTCPKCQR…LMKYGGKQND (254 aa). Positions 33, 36, 51, and 54 each coordinate Zn(2+). The segment at 33-54 adopts a C4-type zinc-finger fold; that stretch reads CPKCQRTLFAAQMDEYATCPGC.

Belongs to the AccD/PCCB family. Acetyl-CoA carboxylase is a heterohexamer composed of biotin carboxyl carrier protein (AccB), biotin carboxylase (AccC) and two subunits each of ACCase subunit alpha (AccA) and ACCase subunit beta (AccD). Zn(2+) serves as cofactor.

It is found in the cytoplasm. The enzyme catalyses N(6)-carboxybiotinyl-L-lysyl-[protein] + acetyl-CoA = N(6)-biotinyl-L-lysyl-[protein] + malonyl-CoA. It functions in the pathway lipid metabolism; malonyl-CoA biosynthesis; malonyl-CoA from acetyl-CoA: step 1/1. Its function is as follows. Component of the acetyl coenzyme A carboxylase (ACC) complex. Biotin carboxylase (BC) catalyzes the carboxylation of biotin on its carrier protein (BCCP) and then the CO(2) group is transferred by the transcarboxylase to acetyl-CoA to form malonyl-CoA. The polypeptide is Acetyl-coenzyme A carboxylase carboxyl transferase subunit beta (Limosilactobacillus fermentum (strain NBRC 3956 / LMG 18251) (Lactobacillus fermentum)).